The chain runs to 598 residues: Thiamine transporter (598 aa).

Over 1 to 41 (MSFGSKVSRALRFLEIPVKDRASVSFLKNPDLQPIKSANQT) the chain is Cytoplasmic. Residues 42–62 (WGFWSNFAYWGVMSFSVGTWM) traverse the membrane as a helical segment. Over 63–73 (SASSALGVGLS) the chain is Extracellular. The helical transmembrane segment at 74-94 (YPETIGTFIVGDVLTIIFTLA) threads the bilayer. Over 95-111 (NSCPGYDWKVGFTLAQR) the chain is Cytoplasmic. Residues 112 to 132 (FVFGIYGSAFGIIIRILMSIV) form a helical membrane-spanning segment. Residues 133–173 (NYGSNAWVGGLCINMILDSWSHHYLHLPNTLSSKVAMTTKE) lie on the Extracellular side of the membrane. The chain crosses the membrane as a helical span at residues 174–194 (LIGFIIFHVLTAFCYLMKPYH). Over 195–197 (MNY) the chain is Cytoplasmic. Residues 198-218 (ILIWSCVATFFSMLGMVIYLA) traverse the membrane as a helical segment. The Extracellular segment spans residues 219-240 (KQAHGVGELFTSTKSTATGSTK). A helical transmembrane segment spans residues 241-261 (AWAWVYMISYWFGSVSPGSTN). At 262 to 274 (QSDYSRFGSSNWA) the chain is on the cytoplasmic side. Residues 275–295 (IWAGTICALLIPTTLIPVFGV) traverse the membrane as a helical segment. Residues 296-332 (IGASTCDKLYGEQYWMPMDIFNHWLTTNYSAGARAGA) lie on the Extracellular side of the membrane. The helical transmembrane segment at 333–353 (FFCGLSFVLSQMSYTISNCGF) threads the bilayer. Residues 354 to 371 (ASGMDLAGLLPKYVDIKR) are Cytoplasmic-facing. Residues 372–392 (GALFAACVSWACLPWNFYNSS) form a helical membrane-spanning segment. Residues 393 to 394 (ST) lie on the Extracellular side of the membrane. The helical transmembrane segment at 395–415 (FLTVMSSFGVVMTPIISVMIC) threads the bilayer. Topologically, residues 416 to 446 (DNFLIRKRQYSITNAFILKGEYYFTKGVNWR) are cytoplasmic. A helical membrane pass occupies residues 447–467 (AIVAWVCGMTPGLPGIAWEVN). The Extracellular segment spans residues 468 to 483 (NDYFHNTGIVNFFYGD). A helical transmembrane segment spans residues 484 to 504 (SFFSFLISFFVYWGLCLLFPF). The Cytoplasmic segment spans residues 505–598 (KITVKHDDKD…QSSTASEKAA (94 aa)). Position 560 is a phosphoserine (Ser560). The interval 574–598 (NTNEFEIVHHKNNEKQSSTASEKAA) is disordered. Over residues 588–598 (KQSSTASEKAA) the composition is skewed to polar residues.

The protein belongs to the purine-cytosine permease (2.A.39) family.

The protein resides in the membrane. In terms of biological role, responsible for intake of thiamine. This chain is Thiamine transporter (THI7), found in Saccharomyces cerevisiae (strain ATCC 204508 / S288c) (Baker's yeast).